The following is a 282-amino-acid chain: Bifunctional protein FolD (282 aa).

Residues 162–164 (GRS), Ser-187, and Val-228 contribute to the NADP(+) site.

Belongs to the tetrahydrofolate dehydrogenase/cyclohydrolase family. In terms of assembly, homodimer.

It carries out the reaction (6R)-5,10-methylene-5,6,7,8-tetrahydrofolate + NADP(+) = (6R)-5,10-methenyltetrahydrofolate + NADPH. The catalysed reaction is (6R)-5,10-methenyltetrahydrofolate + H2O = (6R)-10-formyltetrahydrofolate + H(+). Its pathway is one-carbon metabolism; tetrahydrofolate interconversion. In terms of biological role, catalyzes the oxidation of 5,10-methylenetetrahydrofolate to 5,10-methenyltetrahydrofolate and then the hydrolysis of 5,10-methenyltetrahydrofolate to 10-formyltetrahydrofolate. The chain is Bifunctional protein FolD from Thermus thermophilus (strain ATCC BAA-163 / DSM 7039 / HB27).